Consider the following 156-residue polypeptide: Small ribosomal subunit protein uS7 (156 aa).

Belongs to the universal ribosomal protein uS7 family. In terms of assembly, part of the 30S ribosomal subunit. Contacts proteins S9 and S11.

One of the primary rRNA binding proteins, it binds directly to 16S rRNA where it nucleates assembly of the head domain of the 30S subunit. Is located at the subunit interface close to the decoding center, probably blocks exit of the E-site tRNA. The polypeptide is Small ribosomal subunit protein uS7 (Synechococcus sp. (strain CC9605)).